The following is a 440-amino-acid chain: UDP-N-acetylmuramoylalanine--D-glutamate ligase (440 aa).

115–121 (GSNGKST) is an ATP binding site.

It belongs to the MurCDEF family.

The protein resides in the cytoplasm. It carries out the reaction UDP-N-acetyl-alpha-D-muramoyl-L-alanine + D-glutamate + ATP = UDP-N-acetyl-alpha-D-muramoyl-L-alanyl-D-glutamate + ADP + phosphate + H(+). It participates in cell wall biogenesis; peptidoglycan biosynthesis. Cell wall formation. Catalyzes the addition of glutamate to the nucleotide precursor UDP-N-acetylmuramoyl-L-alanine (UMA). The polypeptide is UDP-N-acetylmuramoylalanine--D-glutamate ligase (Vibrio cholerae serotype O1 (strain ATCC 39315 / El Tor Inaba N16961)).